A 289-amino-acid polypeptide reads, in one-letter code: 4-diphosphocytidyl-2-C-methyl-D-erythritol kinase (289 aa).

Lys10 is an active-site residue. 94–104 (PVAAGLAGGSS) serves as a coordination point for ATP. The active site involves Asp136.

It belongs to the GHMP kinase family. IspE subfamily.

The enzyme catalyses 4-CDP-2-C-methyl-D-erythritol + ATP = 4-CDP-2-C-methyl-D-erythritol 2-phosphate + ADP + H(+). Its pathway is isoprenoid biosynthesis; isopentenyl diphosphate biosynthesis via DXP pathway; isopentenyl diphosphate from 1-deoxy-D-xylulose 5-phosphate: step 3/6. Functionally, catalyzes the phosphorylation of the position 2 hydroxy group of 4-diphosphocytidyl-2C-methyl-D-erythritol. This Bacillus cereus (strain G9842) protein is 4-diphosphocytidyl-2-C-methyl-D-erythritol kinase.